The following is a 1029-amino-acid chain: MAPFLASPIRLHPCPLLFSHPHLFGSDYFAFSVKGRGAHLESMRVENKRGNRSWGTDAKRTHPNSIFNQLVRYGYIGTGFPDMNCSLTWSLIGGPSTLSLPSFFPSAHLLLSLALFFFLCIQSNHRMSKSGCERCRGRGFWDTDDQDTYFFKVMIGGFRRQMTIPYKFAENFRDQIQGTIKLKARNGNTCSVLVDKCSNKLVLTKGWAEFANSHDIKMGDFLVFRYTGNSQFEVKIFDPSGCVKAASHNAVNIGQHAQNMQGDPIEILSCSDEHLRAQSLTTERQNQPEKDVIDNCNKKMKTEHASSSEDDQETPTAEVHRMKVEEMVRAIHSNHPVFVAVMKKSNVTRQPCYVAISRKYANEYFPGGDQMLTLQRHGKRWQVKFCISKRKLRMLSKGWRKFTRDNELQHWAPLALFITLFFSPHFRKMKKCGQKMRKLNTRSTARDDQEKYFFKVMIGDFHKRMTIPDKFARHFKGVISKTIKLEPRSGYTFDVQVTKKLNILVLGSGWESFVNAHDLNMGDFLVFKYNGDFLLQVLIFDPSGCEKSTSCSMENAIDHVGQGWKEHNDISTSYHDQPKGNKHWMQKDSSSKGNKIGNTRSSNTPSKFSGCILPRGTCLPVVQEKKMKEKIQAIHSKTPMYGNVMTKCNVSGSPCVLEITQLYDDAYLPFNNGQELMLRHRDKSWKVRFYRFKNKSRKLTQASSLYKMRRPGARCREGHAHFNGNHIDGQYKNFFKVMIGRFRERMIIPNEFLQYFRGKIPRTIKLQLRDGCTYDVQVTKNLGKISLQSGWKAFVTAHDLQMGDFLVFSYDGISKLKVLIFGPSGCEKVHSRSTLKNATHCGEKWEEPLHISSNSHDLPVKSPQNVSKSEKQWDSSEQENDTANIEEVALQGDDLQGHPVLNCILPKHTRLTDMQKQQLESKVGAIHSEIPIYGCILRKSRVHGKSQTVDICREYADVYLPFKELNMTLQRHGKNWEVLCRTKDTRTKRLSTGWSRFAQENNLQVGDICLFELLKKKEYSMNVHIIPKK.

DNA-binding regions (TF-B3) lie at residues 147 to 240 (DTYF…FDPS), 339 to 430 (VAVM…RKMK), and 450 to 543 (EKYF…FDPS). The tract at residues 572 to 605 (TSYHDQPKGNKHWMQKDSSSKGNKIGNTRSSNTP) is disordered. Positions 591-605 (SKGNKIGNTRSSNTP) are enriched in polar residues. Residues 731-824 (YKNFFKVMIG…KLKVLIFGPS (94 aa)) constitute a DNA-binding region (TF-B3 4). Polar residues predominate over residues 852 to 867 (SSNSHDLPVKSPQNVS). Positions 852 to 882 (SSNSHDLPVKSPQNVSKSEKQWDSSEQENDT) are disordered. Residues 934–1029 (GCILRKSRVH…SMNVHIIPKK (96 aa)) constitute a DNA-binding region (TF-B3 5).

The protein localises to the nucleus. The protein is Putative B3 domain-containing protein Os03g0621600 of Oryza sativa subsp. japonica (Rice).